A 90-amino-acid polypeptide reads, in one-letter code: Putative defensin-like protein 243 (90 aa).

Positions 1–19 (MKVEVIFLASCVLFSLIHA) are cleaved as a signal peptide. Cystine bridges form between cysteine 33–cysteine 88, cysteine 43–cysteine 72, cysteine 53–cysteine 82, and cysteine 70–cysteine 84.

This sequence belongs to the DEFL family.

It localises to the secreted. The protein is Putative defensin-like protein 243 (SCRL9) of Arabidopsis thaliana (Mouse-ear cress).